Here is a 163-residue protein sequence, read N- to C-terminus: NADH-quinone oxidoreductase subunit I (163 aa).

4Fe-4S ferredoxin-type domains are found at residues L53–G83 and V94–N123. 8 residues coordinate [4Fe-4S] cluster: C63, C66, C69, C73, C103, C106, C109, and C113.

The protein belongs to the complex I 23 kDa subunit family. NDH-1 is composed of 14 different subunits. Subunits NuoA, H, J, K, L, M, N constitute the membrane sector of the complex. It depends on [4Fe-4S] cluster as a cofactor.

Its subcellular location is the cell inner membrane. The catalysed reaction is a quinone + NADH + 5 H(+)(in) = a quinol + NAD(+) + 4 H(+)(out). Functionally, NDH-1 shuttles electrons from NADH, via FMN and iron-sulfur (Fe-S) centers, to quinones in the respiratory chain. The immediate electron acceptor for the enzyme in this species is believed to be ubiquinone. Couples the redox reaction to proton translocation (for every two electrons transferred, four hydrogen ions are translocated across the cytoplasmic membrane), and thus conserves the redox energy in a proton gradient. The polypeptide is NADH-quinone oxidoreductase subunit I (Brucella anthropi (strain ATCC 49188 / DSM 6882 / CCUG 24695 / JCM 21032 / LMG 3331 / NBRC 15819 / NCTC 12168 / Alc 37) (Ochrobactrum anthropi)).